The chain runs to 175 residues: Transcription factor E (175 aa).

Residues 8–90 (NDPVIQKYLH…LWTFQYENIP (83 aa)) form the HTH TFE/IIEalpha-type domain.

Belongs to the TFE family. As to quaternary structure, monomer. Interaction with RNA polymerase subunits RpoF and RpoE is necessary for Tfe stimulatory transcription activity. Able to interact with Tbp and RNA polymerase in the absence of DNA promoter. Interacts both with the preinitiation and elongation complexes.

Transcription factor that plays a role in the activation of archaeal genes transcribed by RNA polymerase. Facilitates transcription initiation by enhancing TATA-box recognition by TATA-box-binding protein (Tbp), and transcription factor B (Tfb) and RNA polymerase recruitment. Not absolutely required for transcription in vitro, but particularly important in cases where Tbp or Tfb function is not optimal. It dynamically alters the nucleic acid-binding properties of RNA polymerases by stabilizing the initiation complex and destabilizing elongation complexes. Seems to translocate with the RNA polymerase following initiation and acts by binding to the non template strand of the transcription bubble in elongation complexes. This is Transcription factor E from Natronomonas pharaonis (strain ATCC 35678 / DSM 2160 / CIP 103997 / JCM 8858 / NBRC 14720 / NCIMB 2260 / Gabara) (Halobacterium pharaonis).